We begin with the raw amino-acid sequence, 308 residues long: Glycosyltransferase 6 domain-containing protein 1 (308 aa).

Residues 1–6 lie on the Cytoplasmic side of the membrane; it reads MNSKRM. The helical; Signal-anchor for type II membrane protein transmembrane segment at 7-23 threads the bilayer; sequence LLLVLFAFSLMLVERYF. The Lumenal portion of the chain corresponds to 24-308; that stretch reads RNHQVEELRL…KVAHDSHRKL (285 aa). An N-linked (GlcNAc...) asparagine glycan is attached at asparagine 74. Substrate is bound by residues 82–87, 173–175, and 195–198; these read FATGRF, AVN, and HAWW. Glutamate 263 serves as the catalytic Nucleophile.

It belongs to the glycosyltransferase 6 family. The cofactor is Mn(2+).

The protein resides in the membrane. The polypeptide is Glycosyltransferase 6 domain-containing protein 1 (GLT6D1) (Macaca fascicularis (Crab-eating macaque)).